The chain runs to 238 residues: Lactate utilization protein A (238 aa).

The protein belongs to the LutA/YkgE family.

In terms of biological role, is involved in L-lactate degradation and allows cells to grow with lactate as the sole carbon source. The chain is Lactate utilization protein A from Bacillus pumilus (strain SAFR-032).